The sequence spans 212 residues: MDNRFITIEGLDGAGKTTITHRVSKYLNQYGVTDILTTHEPGGTPVSDFLRVLIKYGGPMNEPINSISELLMIYAARLQLIENVIKPALSKGYWVIGDRFDLSSQAYQGGGRGIDILLLHALSNKITNTLSPDLTFYLDISPELSISRINHRQKLDRIEQEPLSFFDRVRSCYKKLASERKNIITIDATQSLEEVSMSIYRHLDWWFLRPQE.

10–17 (GLDGAGKT) lines the ATP pocket.

This sequence belongs to the thymidylate kinase family.

The catalysed reaction is dTMP + ATP = dTDP + ADP. Functionally, phosphorylation of dTMP to form dTDP in both de novo and salvage pathways of dTTP synthesis. The chain is Thymidylate kinase from Blochmanniella pennsylvanica (strain BPEN).